Consider the following 338-residue polypeptide: UDP-3-O-acylglucosamine N-acyltransferase (338 aa).

His-251 functions as the Proton acceptor in the catalytic mechanism.

Belongs to the transferase hexapeptide repeat family. LpxD subfamily. Homotrimer.

The enzyme catalyses a UDP-3-O-[(3R)-3-hydroxyacyl]-alpha-D-glucosamine + a (3R)-hydroxyacyl-[ACP] = a UDP-2-N,3-O-bis[(3R)-3-hydroxyacyl]-alpha-D-glucosamine + holo-[ACP] + H(+). Its pathway is bacterial outer membrane biogenesis; LPS lipid A biosynthesis. Catalyzes the N-acylation of UDP-3-O-acylglucosamine using 3-hydroxyacyl-ACP as the acyl donor. Is involved in the biosynthesis of lipid A, a phosphorylated glycolipid that anchors the lipopolysaccharide to the outer membrane of the cell. This is UDP-3-O-acylglucosamine N-acyltransferase from Psychrobacter arcticus (strain DSM 17307 / VKM B-2377 / 273-4).